The sequence spans 504 residues: D-alanine--D-alanyl carrier protein ligase (504 aa).

152 to 153 (TS) serves as a coordination point for ATP. Asp197 is a D-alanine binding site. 292-297 (NTYGPT) contacts ATP. Val301 serves as a coordination point for D-alanine. Residues Asp383, 394 to 397 (YNGR), and Lys492 each bind ATP. Lys492 serves as a coordination point for D-alanine.

This sequence belongs to the ATP-dependent AMP-binding enzyme family. DltA subfamily.

Its subcellular location is the cytoplasm. The enzyme catalyses holo-[D-alanyl-carrier protein] + D-alanine + ATP = D-alanyl-[D-alanyl-carrier protein] + AMP + diphosphate. It functions in the pathway cell wall biogenesis; lipoteichoic acid biosynthesis. Catalyzes the first step in the D-alanylation of lipoteichoic acid (LTA), the activation of D-alanine and its transfer onto the D-alanyl carrier protein (Dcp) DltC. In an ATP-dependent two-step reaction, forms a high energy D-alanyl-AMP intermediate, followed by transfer of the D-alanyl residue as a thiol ester to the phosphopantheinyl prosthetic group of the Dcp. D-alanylation of LTA plays an important role in modulating the properties of the cell wall in Gram-positive bacteria, influencing the net charge of the cell wall. The sequence is that of D-alanine--D-alanyl carrier protein ligase from Bacillus cereus (strain AH187).